Consider the following 569-residue polypeptide: Alpha-amylase (569 aa).

An N-terminal signal peptide occupies residues 1-28; sequence MARKTVAAALALVAGAAVAVTGNAPAQA. 3 residues coordinate Ca(2+): Asn-120, Gln-166, and Asp-175. Asp-205 serves as the catalytic Nucleophile. His-209 serves as a coordination point for Ca(2+). Residue Glu-232 is the Proton donor of the active site. Positions 468–569 constitute a CBM20 domain; sequence TTPPATSGAS…QLVLNDTFRS (102 aa).

It belongs to the glycosyl hydrolase 13 family. Monomer. Ca(2+) is required as a cofactor.

It carries out the reaction Endohydrolysis of (1-&gt;4)-alpha-D-glucosidic linkages in polysaccharides containing three or more (1-&gt;4)-alpha-linked D-glucose units.. The chain is Alpha-amylase (aml) from Streptomyces violaceus (Streptomyces venezuelae).